Here is a 116-residue protein sequence, read N- to C-terminus: UPF0329 protein ECU05_1650 (116 aa).

The protein belongs to the UPF0329 family.

The polypeptide is UPF0329 protein ECU05_1650 (Encephalitozoon cuniculi (strain GB-M1) (Microsporidian parasite)).